The following is a 261-amino-acid chain: Cytochrome c oxidase subunit 3 (261 aa).

At 1-15 the chain is on the mitochondrial matrix side; that stretch reads MTHQTHAYHMVNPSP. A helical transmembrane segment spans residues 16-34; sequence WPLTGALSALLMTSGLIMW. Residues 35–40 are Mitochondrial intermembrane-facing; the sequence is FHFNST. The chain crosses the membrane as a helical span at residues 41 to 66; that stretch reads TLLMLGLTTNMLTMYQWWRDVVREST. Residues 67 to 72 lie on the Mitochondrial matrix side of the membrane; the sequence is FQGHHT. The helical transmembrane segment at 73–105 threads the bilayer; that stretch reads PNVQKGLRYGMILFIISEVLFFTGFFWAFYHSS. The Mitochondrial intermembrane segment spans residues 106 to 128; the sequence is LAPTPELGGCWPPTGINPLNPLE. The helical transmembrane segment at 129–152 threads the bilayer; it reads VPLLNTSVLLASGVSITWAHHSLM. The Mitochondrial matrix portion of the chain corresponds to 153-155; sequence EGN. The chain crosses the membrane as a helical span at residues 156 to 183; that stretch reads RNHMLQALFITIALGVYFTLLQASEYYE. At 184–190 the chain is on the mitochondrial intermembrane side; it reads APFTISD. A helical membrane pass occupies residues 191–223; the sequence is GVYGSTFFVATGFHGLHVIIGSTFLIVCFFRQL. Residues 224 to 232 lie on the Mitochondrial matrix side of the membrane; the sequence is KFHFTSNHH. Residues 233 to 256 form a helical membrane-spanning segment; that stretch reads FGFEAAAWYWHFVDVVWLFLYVSI. The Mitochondrial intermembrane portion of the chain corresponds to 257-261; it reads YWWGS.

It belongs to the cytochrome c oxidase subunit 3 family. Component of the cytochrome c oxidase (complex IV, CIV), a multisubunit enzyme composed of 14 subunits. The complex is composed of a catalytic core of 3 subunits MT-CO1, MT-CO2 and MT-CO3, encoded in the mitochondrial DNA, and 11 supernumerary subunits COX4I, COX5A, COX5B, COX6A, COX6B, COX6C, COX7A, COX7B, COX7C, COX8 and NDUFA4, which are encoded in the nuclear genome. The complex exists as a monomer or a dimer and forms supercomplexes (SCs) in the inner mitochondrial membrane with NADH-ubiquinone oxidoreductase (complex I, CI) and ubiquinol-cytochrome c oxidoreductase (cytochrome b-c1 complex, complex III, CIII), resulting in different assemblies (supercomplex SCI(1)III(2)IV(1) and megacomplex MCI(2)III(2)IV(2)).

Its subcellular location is the mitochondrion inner membrane. It catalyses the reaction 4 Fe(II)-[cytochrome c] + O2 + 8 H(+)(in) = 4 Fe(III)-[cytochrome c] + 2 H2O + 4 H(+)(out). Its function is as follows. Component of the cytochrome c oxidase, the last enzyme in the mitochondrial electron transport chain which drives oxidative phosphorylation. The respiratory chain contains 3 multisubunit complexes succinate dehydrogenase (complex II, CII), ubiquinol-cytochrome c oxidoreductase (cytochrome b-c1 complex, complex III, CIII) and cytochrome c oxidase (complex IV, CIV), that cooperate to transfer electrons derived from NADH and succinate to molecular oxygen, creating an electrochemical gradient over the inner membrane that drives transmembrane transport and the ATP synthase. Cytochrome c oxidase is the component of the respiratory chain that catalyzes the reduction of oxygen to water. Electrons originating from reduced cytochrome c in the intermembrane space (IMS) are transferred via the dinuclear copper A center (CU(A)) of subunit 2 and heme A of subunit 1 to the active site in subunit 1, a binuclear center (BNC) formed by heme A3 and copper B (CU(B)). The BNC reduces molecular oxygen to 2 water molecules using 4 electrons from cytochrome c in the IMS and 4 protons from the mitochondrial matrix. In Gazella leptoceros (Sand gazelle), this protein is Cytochrome c oxidase subunit 3 (MT-CO3).